The sequence spans 417 residues: Gamma-glutamyl phosphate reductase (417 aa).

The protein belongs to the gamma-glutamyl phosphate reductase family.

It localises to the cytoplasm. The catalysed reaction is L-glutamate 5-semialdehyde + phosphate + NADP(+) = L-glutamyl 5-phosphate + NADPH + H(+). Its pathway is amino-acid biosynthesis; L-proline biosynthesis; L-glutamate 5-semialdehyde from L-glutamate: step 2/2. In terms of biological role, catalyzes the NADPH-dependent reduction of L-glutamate 5-phosphate into L-glutamate 5-semialdehyde and phosphate. The product spontaneously undergoes cyclization to form 1-pyrroline-5-carboxylate. The protein is Gamma-glutamyl phosphate reductase of Escherichia coli O6:H1 (strain CFT073 / ATCC 700928 / UPEC).